Here is a 446-residue protein sequence, read N- to C-terminus: uncharacterized protein (446 aa).

Disordered regions lie at residues 198–233 (SIQKQIPKQTQEQTQKQTQEQTQESSQNPHNEENYS), 309–337 (NEDNKNNMDNEEDSDESDIESDSDLDDSK), and 394–431 (SESVKSDSNESKSIKPESIKSESIKSDNSNNHKNFGNT). Residues 199 to 224 (IQKQIPKQTQEQTQKQTQEQTQESSQ) show a composition bias toward low complexity. Residues 317–333 (DNEEDSDESDIESDSDL) are compositionally biased toward acidic residues. Over residues 397–418 (VKSDSNESKSIKPESIKSESIK) the composition is skewed to basic and acidic residues.

This is an uncharacterized protein from Acanthamoeba polyphaga mimivirus (APMV).